The primary structure comprises 445 residues: 6-phosphogluconate dehydrogenase, decarboxylating (445 aa).

Residues 1–4, 22–24, 63–65, and Asn91 each bind NADP(+); these read AVMG, NRS, and VKA. Substrate contacts are provided by residues Asn91 and 117-119; that span reads SGG. The active-site Proton acceptor is the Lys172. 175–176 contributes to the substrate binding site; it reads HN. Glu179 (proton donor) is an active-site residue. Positions 180, 249, 276, 434, and 440 each coordinate substrate.

The protein belongs to the 6-phosphogluconate dehydrogenase family. In terms of assembly, homodimer.

It catalyses the reaction 6-phospho-D-gluconate + NADP(+) = D-ribulose 5-phosphate + CO2 + NADPH. It functions in the pathway carbohydrate degradation; pentose phosphate pathway; D-ribulose 5-phosphate from D-glucose 6-phosphate (oxidative stage): step 3/3. Catalyzes the oxidative decarboxylation of 6-phosphogluconate to ribulose 5-phosphate and CO(2), with concomitant reduction of NADP to NADPH. This is 6-phosphogluconate dehydrogenase, decarboxylating (gnd) from Shigella boydii.